The primary structure comprises 449 residues: tRNA-2-methylthio-N(6)-dimethylallyladenosine synthase (449 aa).

Residues 4 to 119 (RTFHIETFGC…APQALDRLVE (116 aa)) form the MTTase N-terminal domain. The [4Fe-4S] cluster site is built by C13, C48, C82, C158, C162, and C165. The Radical SAM core domain maps to 144 to 375 (GAVPASVFVN…QTLQNRLTER (232 aa)). Residues 378–446 (QDMVGKKVEV…KHSLLAEQAG (69 aa)) enclose the TRAM domain.

It belongs to the methylthiotransferase family. MiaB subfamily. Monomer. [4Fe-4S] cluster is required as a cofactor.

The protein localises to the cytoplasm. It catalyses the reaction N(6)-dimethylallyladenosine(37) in tRNA + (sulfur carrier)-SH + AH2 + 2 S-adenosyl-L-methionine = 2-methylsulfanyl-N(6)-dimethylallyladenosine(37) in tRNA + (sulfur carrier)-H + 5'-deoxyadenosine + L-methionine + A + S-adenosyl-L-homocysteine + 2 H(+). Functionally, catalyzes the methylthiolation of N6-(dimethylallyl)adenosine (i(6)A), leading to the formation of 2-methylthio-N6-(dimethylallyl)adenosine (ms(2)i(6)A) at position 37 in tRNAs that read codons beginning with uridine. This is tRNA-2-methylthio-N(6)-dimethylallyladenosine synthase from Nitratidesulfovibrio vulgaris (strain DP4) (Desulfovibrio vulgaris).